The primary structure comprises 86 residues: YcgL domain-containing protein XCV4171 (86 aa).

The 83-residue stretch at 1 to 83 folds into the YcgL domain; it reads MHAYVYKSQR…PKTIVLAGEC (83 aa).

In Xanthomonas euvesicatoria pv. vesicatoria (strain 85-10) (Xanthomonas campestris pv. vesicatoria), this protein is YcgL domain-containing protein XCV4171.